We begin with the raw amino-acid sequence, 1161 residues long: DNA-directed RNA polymerase subunit beta (1161 aa).

This sequence belongs to the RNA polymerase beta chain family. As to quaternary structure, the RNAP catalytic core consists of 2 alpha, 1 beta, 1 beta' and 1 omega subunit. When a sigma factor is associated with the core the holoenzyme is formed, which can initiate transcription. The RNAP complex including the principal sigma factor HrdB also interacts with RNA-binding protein RbpA.

The catalysed reaction is RNA(n) + a ribonucleoside 5'-triphosphate = RNA(n+1) + diphosphate. Functionally, DNA-dependent RNA polymerase catalyzes the transcription of DNA into RNA using the four ribonucleoside triphosphates as substrates. The chain is DNA-directed RNA polymerase subunit beta from Streptomyces coelicolor (strain ATCC BAA-471 / A3(2) / M145).